Here is a 146-residue protein sequence, read N- to C-terminus: Hemoglobin subunit beta (146 aa).

The Globin domain maps to 2–146; the sequence is HWTAEEKQLI…VAHALARKYH (145 aa). Heme b is bound by residues His-63 and His-92.

The protein belongs to the globin family. As to quaternary structure, heterotetramer of two alpha chains and two beta chains. As to expression, red blood cells.

Its function is as follows. Involved in oxygen transport from the lung to the various peripheral tissues. The polypeptide is Hemoglobin subunit beta (HBB) (Anas platyrhynchos platyrhynchos (Northern mallard)).